The sequence spans 824 residues: Lysine-specific histone demethylase 1B homolog (824 aa).

The segment at 1 to 31 (MTTELEIDDRKEEEAQIPGETSESEEGDEPV) is disordered. One can recognise an SWIRM domain in the interval 245–346 (PFTDVIANIV…YGAFDFRIDP (102 aa)). FAD contacts are provided by residues 352–407 (PKIA…AQII), V579, E788, and 796–798 (QTM).

It belongs to the flavin monoamine oxidase family. It depends on FAD as a cofactor. As to expression, in hermaphrodites, expressed in gut cells, embryonic cells and sheath cells. Not expressed in sperm or pharyngeal neurons.

The protein localises to the nucleus. It catalyses the reaction N(6),N(6)-dimethyl-L-lysyl(4)-[histone H3] + 2 A + 2 H2O = L-lysyl(4)-[histone H3] + 2 formaldehyde + 2 AH2. Functionally, histone demethylase that demethylates di-methylated 'Lys-4' of histone H3, a specific tag for epigenetic transcriptional activation, thereby acting as a corepressor. Acts by oxidizing the substrate by FAD to generate the corresponding imine that is subsequently hydrolyzed. Plays a role in the mitotic development of the germline. May be involved in H3 demethylation in mitotic cells including gut and embryonic cells. Plays a role in sensitivity upon interstrand cross-link DNA damage, probably by positively regulating the expression of mlh-1. Plays a role in developmental growth and lifespan regulation in response to ultraviolet-induced damage. No obvious role in larval development, sex chromosome segregation or for regulating meiotic crossover frequency. The sequence is that of Lysine-specific histone demethylase 1B homolog from Caenorhabditis elegans.